The primary structure comprises 160 residues: Methyl-coenzyme M reductase operon protein D (160 aa).

MCR is composed of three subunits: alpha, beta, and gamma. The function of proteins C and D is not known.

In Methanococcus vannielii, this protein is Methyl-coenzyme M reductase operon protein D (mcrD).